Here is a 455-residue protein sequence, read N- to C-terminus: MAPQLLLCLILTFLWSVPEAESNVFLKSKVANRFLQRTKRSNSLFEEIRPGNIERECIEEKCSKEEAREVFEDNEKTETFWNVYVDGDQCSSNPCHYHGTCKDGIGSYTCTCLPNYEGKNCEKVLFKSCRAFNGNCWHFCKRVQSETQCSCAESYRLGVDGHSCVAEGDFSCGRNIKARNKREASLPDFVQSQKATLLKKSDNPSPDIRIVNGMDSKLGECPWQAVLINEKGEVFCGGTILSPIHVLTAAHCINQTKSVSVIVGEIDISRKETRRLLSVDKIYVHTKFVPPNYYYGHQNFDRVAYDYDIAIIRMKTPIQFSENVVPACLPTADFANEVLMKQDSGIVSGFGRIRFKEPTSNTLKVITVPYVDRHTCMLSSDFRITQNMFCAGYDTLPQDACEGDSGGPHITAYGDTHFITGIVSWGEGCARKGKYGVYTKVSRFIPWIKKIMSLK.

The first 20 residues, 1–20 (MAPQLLLCLILTFLWSVPEA), serve as a signal peptide directing secretion. Residues 21-40 (ESNVFLKSKVANRFLQRTKR) constitute a propeptide that is removed on maturation. The 46-residue stretch at 41 to 86 (SNSLFEEIRPGNIERECIEEKCSKEEAREVFEDNEKTETFWNVYVD) folds into the Gla domain. 4-carboxyglutamate is present on residues Glu46, Glu47, Glu54, Glu56, Glu59, Glu60, Glu65, Glu66, Glu69, Glu72, and Glu75. The cysteines at positions 57 and 62 are disulfide-linked. The EGF-like 1; calcium-binding domain maps to 86-121 (DGDQCSSNPCHYHGTCKDGIGSYTCTCLPNYEGKNC). Cystine bridges form between Cys90-Cys101, Cys95-Cys110, Cys112-Cys121, Cys129-Cys140, Cys136-Cys149, Cys151-Cys164, Cys172-Cys328, Cys236-Cys252, Cys376-Cys390, and Cys401-Cys429. Residue Ser92 is glycosylated (O-linked (Hex...) serine). Positions 129–164 (CRAFNGNCWHFCKRVQSETQCSCAESYRLGVDGHSC) constitute an EGF-like 2 domain. The propeptide at 182-209 (REASLPDFVQSQKATLLKKSDNPSPDIR) is activation peptide. The region spanning 210–453 (IVNGMDSKLG…FIPWIKKIMS (244 aa)) is the Peptidase S1 domain. His251 (charge relay system) is an active-site residue. Asn254 carries an N-linked (GlcNAc...) asparagine glycan. The active-site Charge relay system is the Asp308. Ser405 (charge relay system) is an active-site residue.

It belongs to the peptidase S1 family. Snake venom subfamily. Heterodimer of a light chain and a heavy chain; disulfide-linked. In terms of processing, the vitamin K-dependent, enzymatic carboxylation of some glutamate residues allows the modified protein to bind calcium. As to expression, expressed by the venom gland.

The protein resides in the secreted. It carries out the reaction Selective cleavage of Arg-|-Thr and then Arg-|-Ile bonds in prothrombin to form thrombin.. Its function is as follows. Snake prothrombin activator that attacks the hemostatic system of prey. This protein is functionally similar to blood coagulation factor Xa. The procoagulant activity of hopsarin-D is approximately 10-fold lower than that of trocarin-D and FXa. This is Venom prothrombin activator hopsarin-D from Hoplocephalus stephensii (Stephens's banded snake).